The following is a 67-amino-acid chain: Medusin-S1 (67 aa).

The first 22 residues, 1–22, serve as a signal peptide directing secretion; that stretch reads MSFLKKSLFLVLFLGFVSLSIC. A propeptide spanning residues 23-48 is cleaved from the precursor; sequence EEEKRETEEKENEQEDDREERSEEKR. Residues 26–47 are disordered; sequence KRETEEKENEQEDDREERSEEK. The segment covering 31 to 40 has biased composition (acidic residues); sequence EKENEQEDDR. Leu-66 is subject to Leucine amide.

The protein belongs to the frog skin active peptide (FSAP) family. Medusin subfamily. In terms of tissue distribution, expressed by the skin glands.

The protein localises to the secreted. Its subcellular location is the target cell membrane. Its function is as follows. Antibacterial peptide with moderate activity against the Gram-positive bacteria (S.aureus ATCC 25923, MIC=25 uM), but not against all other bacteria (both Gram-positive and Gram-negative) tested. Does not show activity against fungi, and against Leishmania species. It adopts an alpha-helical structure with very low amphipathicity in membrane environments. This Phyllomedusa sauvagei (Sauvage's leaf frog) protein is Medusin-S1.